Consider the following 207-residue polypeptide: Large ribosomal subunit protein uL4 (207 aa).

Residues 56–77 (FVSGGGKKPWRQKGTGRARHGS) form a disordered region. Residues 63–77 (KPWRQKGTGRARHGS) are compositionally biased toward basic residues.

The protein belongs to the universal ribosomal protein uL4 family. In terms of assembly, part of the 50S ribosomal subunit.

One of the primary rRNA binding proteins, this protein initially binds near the 5'-end of the 23S rRNA. It is important during the early stages of 50S assembly. It makes multiple contacts with different domains of the 23S rRNA in the assembled 50S subunit and ribosome. In terms of biological role, forms part of the polypeptide exit tunnel. This Phytoplasma australiense protein is Large ribosomal subunit protein uL4.